We begin with the raw amino-acid sequence, 190 residues long: Putative transcription factor ovo-like protein 3 (190 aa).

2 disordered regions span residues 1-21 and 35-65; these read MPRA…GHLP and SLGG…SAPR. Over residues 41 to 62 the composition is skewed to polar residues; the sequence is AQQSSSVRDPWTAQPTQGNLTS. C2H2-type zinc fingers lie at residues 70–92, 98–120, 126–149, and 165–187; these read LGCP…LKCH, HLCR…MRTH, FRCS…AKVH, and HVCE…RALH.

This sequence belongs to the krueppel C2H2-type zinc-finger protein family.

It is found in the nucleus. Functionally, may act as a transcription regulator. This is Putative transcription factor ovo-like protein 3 (OVOL3) from Homo sapiens (Human).